The chain runs to 692 residues: SH3 domain-containing protein 21 (692 aa).

Residues methionine 1–tyrosine 60 form a disordered region. The SH3 domain maps to serine 65–proline 126. 3 disordered regions span residues proline 132–proline 501, proline 536–threonine 605, and valine 672–tyrosine 692. Residues proline 177–serine 186 are compositionally biased toward basic and acidic residues. The segment covering threonine 210–serine 220 has biased composition (polar residues). Composition is skewed to basic and acidic residues over residues valine 378–glutamine 396, asparagine 490–proline 501, and serine 542–valine 582. A coiled-coil region spans residues serine 628–lysine 678. Over residues methionine 673–tyrosine 692 the composition is skewed to polar residues.

The polypeptide is SH3 domain-containing protein 21 (SH3D21) (Macaca fascicularis (Crab-eating macaque)).